A 637-amino-acid polypeptide reads, in one-letter code: Limonene/alpha-pinene synthase, chloroplastic (637 aa).

Residues Met1–Thr56 constitute a chloroplast transit peptide. The Mg(2+) site is built by Asp388, Asp392, and Asp540. The DDXXD motif motif lies at Asp388–Asp392.

This sequence belongs to the terpene synthase family. Tpsd subfamily. It depends on Mg(2+) as a cofactor. Mn(2+) is required as a cofactor. K(+) serves as cofactor.

The protein localises to the plastid. Its subcellular location is the chloroplast. It carries out the reaction (2E)-geranyl diphosphate = (4S)-limonene + diphosphate. The enzyme catalyses (2E)-geranyl diphosphate = (1S,5S)-alpha-pinene + diphosphate. It functions in the pathway terpene metabolism; oleoresin biosynthesis. Its function is as follows. Involved in defensive oleoresin formation in conifers in response to insect attack or other injury. Involved in monoterpene (C10) olefins biosynthesis. The polypeptide is Limonene/alpha-pinene synthase, chloroplastic (ag11) (Abies grandis (Grand fir)).